The following is a 152-amino-acid chain: Transcriptional repressor NrdR (152 aa).

A zinc finger lies at 3 to 34 (CPFCNHGELKVIDSRNAPEANAIKRRRECLKC). The region spanning 48–138 (LQVLKRDGRY…VYRRFKDVGE (91 aa)) is the ATP-cone domain.

It belongs to the NrdR family. Zn(2+) is required as a cofactor.

Its function is as follows. Negatively regulates transcription of bacterial ribonucleotide reductase nrd genes and operons by binding to NrdR-boxes. The chain is Transcriptional repressor NrdR from Chlamydia pneumoniae (Chlamydophila pneumoniae).